Consider the following 474-residue polypeptide: E3 ubiquitin-protein ligase CBL-C (474 aa).

The interval 7–145 is 4H; it reads PWGRQWEEAR…HALFPGGKYC (139 aa). Residues 7-321 form the Cbl-PTB domain; it reads PWGRQWEEAR…GKTHNPDLTE (315 aa). Residues 146 to 218 are EF-hand-like; sequence GHMYQLTKAP…FEFDVFTRLF (73 aa). Ca(2+) contacts are provided by Asp199, Thr201, and Glu210. Positions 219-321 are SH2-like; it reads QPWPTLLKNW…GKTHNPDLTE (103 aa). Arg264 serves as a coordination point for 4-O-phospho-L-tyrosine. Residues 322–350 are linker; that stretch reads LGQAEPQQRIHVSEEQLQLYWAMDSTFEL. Tyr341 carries the phosphotyrosine; by SRC modification. The RING-type zinc finger occupies 351–390; it reads CKICAESNKDVKIEPCGHLLCSCCLAAWQHSDSQTCPFCR. The tract at residues 351–474 is interaction with RET; the sequence is CKICAESNKD…ALGPQDPAPA (124 aa). The tract at residues 409 to 474 is disordered; the sequence is TAEDSGNSSD…ALGPQDPAPA (66 aa). Pro residues predominate over residues 432-441; it reads SAPPLPPRPD.

As to quaternary structure, interacts with ubiquitin-conjugating enzyme E2 UBE2D2 and UBE2D3. Isoform 1 interacts with EGFR (tyrosine phosphorylated). Interacts with the SH3 domain proteins LYN and CRK. Interacts (via RING-type zinc finger) with TGFB1I1 (via LIM zinc-binding domain 2); the interaction is direct and enhances the E3 activity. Interacts directly with RET (inactive) and CD2AP; dissociates from RET upon RET activation by GDNF which also increases the interaction with CD2AP suggesting dissociation as CBLC:CD2AP complex. Interacts with SRC; the interaction is enhanced when SRC is phosphorylated at 'Tyr-419'. In terms of processing, phosphorylated on multiple tyrosine residues by SRC. Isoform 1, but not isoform 2, is phosphorylated on tyrosines by EGFR. Autoubiquitinated when phosphorylated at Tyr-341, enhanced by SRC; suggesting proteasomal degradation. Ubiquitous.

It catalyses the reaction S-ubiquitinyl-[E2 ubiquitin-conjugating enzyme]-L-cysteine + [acceptor protein]-L-lysine = [E2 ubiquitin-conjugating enzyme]-L-cysteine + N(6)-ubiquitinyl-[acceptor protein]-L-lysine.. Phosphorylation at Tyr-341 is necessary and sufficient for the activation of E3 activity. Functionally, acts as an E3 ubiquitin-protein ligase, which accepts ubiquitin from specific E2 ubiquitin-conjugating enzymes, and then transfers it to substrates promoting their degradation by the proteasome. Functionally coupled with the E2 ubiquitin-protein ligases UB2D1, UB2D2 and UB2D3. Regulator of EGFR mediated signal transduction; upon EGF activation, ubiquitinates EGFR. Isoform 1, but not isoform 2, inhibits EGF stimulated MAPK1 activation. Promotes ubiquitination of SRC phosphorylated at 'Tyr-419'. In collaboration with CD2AP may act as regulatory checkpoint for Ret signaling by modulating the rate of RET degradation after ligand activation; CD2AP converts it from an inhibitor to a promoter of RET degradation; the function limits the potency of GDNF on neuronal survival. This Homo sapiens (Human) protein is E3 ubiquitin-protein ligase CBL-C (CBLC).